The sequence spans 162 residues: Protein-export protein SecB (162 aa).

Belongs to the SecB family. Homotetramer, a dimer of dimers. One homotetramer interacts with 1 SecA dimer.

It localises to the cytoplasm. Functionally, one of the proteins required for the normal export of preproteins out of the cell cytoplasm. It is a molecular chaperone that binds to a subset of precursor proteins, maintaining them in a translocation-competent state. It also specifically binds to its receptor SecA. The protein is Protein-export protein SecB of Legionella pneumophila subsp. pneumophila (strain Philadelphia 1 / ATCC 33152 / DSM 7513).